We begin with the raw amino-acid sequence, 313 residues long: Beta-lactamase FAR-1 (313 aa).

The N-terminal stretch at 1–28 (MPGVDISFLKKSGRRTMAAAAVIALLGG) is a signal peptide. C29 carries N-palmitoyl cysteine lipidation. Residue C29 is the site of S-diacylglycerol cysteine attachment. The active-site Acyl-ester intermediate is S94. Position 154 (S154) interacts with substrate. The active-site Proton acceptor is the E190. 258-260 (KTG) is a binding site for substrate.

This sequence belongs to the class-A beta-lactamase family.

The protein resides in the cell membrane. The catalysed reaction is a beta-lactam + H2O = a substituted beta-amino acid. Its activity is regulated as follows. Inhibited by clavulanic acid, and at a low level by tazobactam and sulbactam. Functionally, confers high levels of resistance to amoxicillin, benzylpenicillin, piperacillin, ticarcillin and cephalothin. Also hydrolyzes aztreonam at a low level. Not active against ceftazidime, cefotaxime and imipenem. The polypeptide is Beta-lactamase FAR-1 (bla) (Nocardia farcinica (strain IFM 10152)).